Reading from the N-terminus, the 243-residue chain is Protein-L-isoaspartate O-methyltransferase (243 aa).

Serine 87 is a catalytic residue.

The protein belongs to the methyltransferase superfamily. L-isoaspartyl/D-aspartyl protein methyltransferase family.

It localises to the cytoplasm. The enzyme catalyses [protein]-L-isoaspartate + S-adenosyl-L-methionine = [protein]-L-isoaspartate alpha-methyl ester + S-adenosyl-L-homocysteine. Catalyzes the methyl esterification of L-isoaspartyl residues in peptides and proteins that result from spontaneous decomposition of normal L-aspartyl and L-asparaginyl residues. It plays a role in the repair and/or degradation of damaged proteins. The polypeptide is Protein-L-isoaspartate O-methyltransferase (Methanosarcina mazei (strain ATCC BAA-159 / DSM 3647 / Goe1 / Go1 / JCM 11833 / OCM 88) (Methanosarcina frisia)).